Consider the following 542-residue polypeptide: CTP synthase (542 aa).

The amidoligase domain stretch occupies residues 1-265 (MARYVFITGG…DSEVLAAFGI (265 aa)). Residue S13 participates in CTP binding. Residue S13 coordinates UTP. ATP is bound by residues 14–19 (SLGKGI) and D71. The Mg(2+) site is built by D71 and E139. CTP is bound by residues 146-148 (DIE), 186-191 (KTKPTQ), and K222. UTP is bound by residues 186–191 (KTKPTQ) and K222. One can recognise a Glutamine amidotransferase type-1 domain in the interval 291 to 541 (TIAIVGKYTG…VEAAVEQSRL (251 aa)). G353 serves as a coordination point for L-glutamine. C380 (nucleophile; for glutamine hydrolysis) is an active-site residue. L-glutamine contacts are provided by residues 381 to 384 (FGMQ), E404, and R469. Active-site residues include H514 and E516.

The protein belongs to the CTP synthase family. Homotetramer.

It catalyses the reaction UTP + L-glutamine + ATP + H2O = CTP + L-glutamate + ADP + phosphate + 2 H(+). It carries out the reaction L-glutamine + H2O = L-glutamate + NH4(+). The enzyme catalyses UTP + NH4(+) + ATP = CTP + ADP + phosphate + 2 H(+). Its pathway is pyrimidine metabolism; CTP biosynthesis via de novo pathway; CTP from UDP: step 2/2. With respect to regulation, allosterically activated by GTP, when glutamine is the substrate; GTP has no effect on the reaction when ammonia is the substrate. The allosteric effector GTP functions by stabilizing the protein conformation that binds the tetrahedral intermediate(s) formed during glutamine hydrolysis. Inhibited by the product CTP, via allosteric rather than competitive inhibition. Catalyzes the ATP-dependent amination of UTP to CTP with either L-glutamine or ammonia as the source of nitrogen. Regulates intracellular CTP levels through interactions with the four ribonucleotide triphosphates. This Agrobacterium fabrum (strain C58 / ATCC 33970) (Agrobacterium tumefaciens (strain C58)) protein is CTP synthase.